Here is a 119-residue protein sequence, read N- to C-terminus: Holo-[acyl-carrier-protein] synthase (119 aa).

Positions 8 and 58 each coordinate Mg(2+).

Belongs to the P-Pant transferase superfamily. AcpS family. Mg(2+) serves as cofactor.

It is found in the cytoplasm. The catalysed reaction is apo-[ACP] + CoA = holo-[ACP] + adenosine 3',5'-bisphosphate + H(+). Its function is as follows. Transfers the 4'-phosphopantetheine moiety from coenzyme A to a Ser of acyl-carrier-protein. The protein is Holo-[acyl-carrier-protein] synthase of Bacillus cereus (strain ATCC 10987 / NRS 248).